Reading from the N-terminus, the 123-residue chain is Ig heavy chain V region H8 (123 aa).

The 114-residue stretch at 1 to 114 folds into the Ig-like domain; sequence EVKLVESGGG…BSYWYFDVWG (114 aa).

The protein is Ig heavy chain V region H8 of Mus musculus (Mouse).